A 205-amino-acid chain; its full sequence is CASP-like protein 3A1 (205 aa).

The Cytoplasmic segment spans residues Met1–Asp39. Residues Leu40–Met60 traverse the membrane as a helical segment. At Ala61–Glu89 the chain is on the extracellular side. The helical transmembrane segment at Phe90–Gly110 threads the bilayer. Residues Met111 to His125 lie on the Cytoplasmic side of the membrane. Residues Ala126 to Ala146 traverse the membrane as a helical segment. Residues Ala147 to Lys176 are Extracellular-facing. An N-linked (GlcNAc...) asparagine glycan is attached at Asn154. The helical transmembrane segment at Ala177 to Leu197 threads the bilayer. Over Asp198–Asn205 the chain is Cytoplasmic.

The protein belongs to the Casparian strip membrane proteins (CASP) family. In terms of assembly, homodimer and heterodimers.

The protein resides in the cell membrane. The polypeptide is CASP-like protein 3A1 (Picea sitchensis (Sitka spruce)).